The sequence spans 191 residues: uncharacterized protein (191 aa).

The region spanning 5–65 (GDSREKILHT…IEAVTYTGKI (61 aa)) is the HTH tetR-type domain. A DNA-binding region (H-T-H motif) is located at residues 28–47 (GLNQIVKESGAPKGSLYHFF).

This is an uncharacterized protein from Bacillus subtilis (strain 168).